The primary structure comprises 519 residues: cAMP-dependent protein kinase catalytic subunit (519 aa).

A disordered region spans residues 1–195 (MLPDTGILSP…SQTLQKAENA (195 aa)). Composition is skewed to polar residues over residues 10–25 (PFTT…SQTL), 116–159 (VTPS…TSPI), and 173–191 (TPVN…TLQK). Residues 208–463 (FNFQRTLGTG…SRSVLEHPWF (256 aa)) enclose the Protein kinase domain. ATP-binding positions include 214-222 (LGTGSFGRV) and lysine 237. The active-site Proton acceptor is aspartate 331. In terms of domain architecture, AGC-kinase C-terminal spans 464–519 (AEVNWERLLSKQIEPPYVPPVRGGIGDASLFDKYPEETEEYGKDGPDQYGHFFTDF).

Belongs to the protein kinase superfamily. Ser/Thr protein kinase family.

The enzyme catalyses L-seryl-[protein] + ATP = O-phospho-L-seryl-[protein] + ADP + H(+). The catalysed reaction is L-threonyl-[protein] + ATP = O-phospho-L-threonyl-[protein] + ADP + H(+). With respect to regulation, activated by cAMP. Functions downstream of adenylate cyclase to regulate trap-development for nematode capture. The chain is cAMP-dependent protein kinase catalytic subunit from Arthrobotrys oligospora (strain ATCC 24927 / CBS 115.81 / DSM 1491) (Nematode-trapping fungus).